A 514-amino-acid polypeptide reads, in one-letter code: Bifunctional purine biosynthesis protein PurH (514 aa).

Residues 1–145 form the MGS-like domain; the sequence is MIKRALISVS…KNYQDVVVIV (145 aa).

This sequence belongs to the PurH family.

The enzyme catalyses (6R)-10-formyltetrahydrofolate + 5-amino-1-(5-phospho-beta-D-ribosyl)imidazole-4-carboxamide = 5-formamido-1-(5-phospho-D-ribosyl)imidazole-4-carboxamide + (6S)-5,6,7,8-tetrahydrofolate. It catalyses the reaction IMP + H2O = 5-formamido-1-(5-phospho-D-ribosyl)imidazole-4-carboxamide. It functions in the pathway purine metabolism; IMP biosynthesis via de novo pathway; 5-formamido-1-(5-phospho-D-ribosyl)imidazole-4-carboxamide from 5-amino-1-(5-phospho-D-ribosyl)imidazole-4-carboxamide (10-formyl THF route): step 1/1. It participates in purine metabolism; IMP biosynthesis via de novo pathway; IMP from 5-formamido-1-(5-phospho-D-ribosyl)imidazole-4-carboxamide: step 1/1. In Acetivibrio thermocellus (strain ATCC 27405 / DSM 1237 / JCM 9322 / NBRC 103400 / NCIMB 10682 / NRRL B-4536 / VPI 7372) (Clostridium thermocellum), this protein is Bifunctional purine biosynthesis protein PurH.